The chain runs to 1591 residues: GATOR1 complex protein DEPDC5 (1591 aa).

3 disordered regions span residues 427–455, 478–532, and 695–720; these read GKKS…TLPI, LATC…STNI, and LSNS…STSP. The segment covering 430–439 has biased composition (basic and acidic residues); sequence SASEKTKNGR. Low complexity predominate over residues 494 to 508; sequence SASSCDVSSSPSLPS. The residue at position 505 (Ser-505) is a Phosphoserine. Over residues 518-532 the composition is skewed to polar residues; the sequence is SQASDDSSLGKSTNI. Ser-992 is modified (phosphoserine). 2 disordered regions span residues 1040 to 1064 and 1118 to 1153; these read SQKS…ENSS and STGQ…SSQQ. The span at 1118 to 1149 shows a compositional bias: polar residues; sequence STGQPMDRGNNQTFGNSQNIEQAFPSANSGDY. The 76-residue stretch at 1175–1250 folds into the DEP domain; it reads PSTGVQLLSE…YGFYFYKIVM (76 aa). Ser-1518 carries the phosphoserine modification.

The protein belongs to the IML1 family. As to quaternary structure, within the GATOR complex, component of the GATOR1 subcomplex, made of DEPDC5, NPRL2 and NPRL3. GATOR1 mediates the strong interaction of the GATOR complex with small GTPases Rag (RagA/RRAGA, RagB/RRAGB, RagC/RRAGC and/or RagD/RRAGD) heterodimers. GATOR1 interacts with GPR155/LYCHOS; interaction takes place in presence of cholesterol and prevents interaction between GATOR1 and KICSTOR. Interacts with SAMTOR; interaction is direct and takes place in presence of methionine, leading to inhibit the activity of the GATOR1 complex. Post-translationally, phosphorylation at Ser-992 and Ser-1518 by AKT1 and PIM1 inhibit the activity of DEPDC5, releasing inhibition of the mTORC1 pathway. In terms of processing, ubiquitinated. Amino acid-induced 'Lys-48'-linked polyubiquitination of DEPDC5 by the BCR(KLHL22) ubiquitin ligase complex leads to DEPDC5 proteasomal degradation and inhibition of the GATOR1 complex. Ubiquitination may occur at multiple lysines. Expressed at low levels in all brain regions. Expressed throughout brain development, including in midgestation embryonic head (11.5 dpc), neonatal brain and whole adult brain. Present in neurons and absent in non-neuronal cells, including astrocytes (at protein level).

The protein localises to the lysosome membrane. It is found in the cytoplasm. It localises to the cytosol. Its subcellular location is the perinuclear region. Its function is as follows. As a component of the GATOR1 complex functions as an inhibitor of the amino acid-sensing branch of the mTORC1 pathway. In response to amino acid depletion, the GATOR1 complex has GTPase activating protein (GAP) activity and strongly increases GTP hydrolysis by RagA/RRAGA (or RagB/RRAGB) within heterodimeric Rag complexes, thereby turning them into their inactive GDP-bound form, releasing mTORC1 from lysosomal surface and inhibiting mTORC1 signaling. In the presence of abundant amino acids, the GATOR1 complex is negatively regulated by GATOR2, the other GATOR subcomplex, in this amino acid-sensing branch of the TORC1 pathway. Within the GATOR1 complex, DEPDC5 mediates direct interaction with the nucleotide-binding pocket of small GTPases Rag (RagA/RRAGA, RagB/RRAGB, RagC/RRAGC and/or RagD/RRAGD) and coordinates their nucleotide loading states by promoting RagA/RRAGA or RagB/RRAGB into their GDP-binding state and RagC/RRAGC or RagD/RRAGD into their GTP-binding state. However, it does not execute the GAP activity, which is mediated by NPRL2. In Mus musculus (Mouse), this protein is GATOR1 complex protein DEPDC5.